A 147-amino-acid polypeptide reads, in one-letter code: Peptide deformylase (147 aa).

Fe cation-binding residues include C88 and H130. The active site involves E131. H134 is a binding site for Fe cation.

It belongs to the polypeptide deformylase family. It depends on Fe(2+) as a cofactor.

The catalysed reaction is N-terminal N-formyl-L-methionyl-[peptide] + H2O = N-terminal L-methionyl-[peptide] + formate. Removes the formyl group from the N-terminal Met of newly synthesized proteins. Requires at least a dipeptide for an efficient rate of reaction. N-terminal L-methionine is a prerequisite for activity but the enzyme has broad specificity at other positions. This chain is Peptide deformylase, found in Clostridium botulinum (strain Alaska E43 / Type E3).